The primary structure comprises 284 residues: AA14 family lytic polysaccharide monooxygenase B (284 aa).

Residues 1 to 20 (MGYLSKLVTSVVFAIPLASA) form the signal peptide. Residues Asn42, Asn96, Asn142, and Asn183 are each glycosylated (N-linked (GlcNAc...) asparagine). A disulfide bridge links Cys197 with Cys218.

Belongs to the polysaccharide monooxygenase AA14 family. Cu(2+) serves as cofactor.

It is found in the secreted. Functionally, lytic polysaccharide monooxygenase (LPMO) that plays decomposes some specific network structures formed between cellulose and hemicellulose in the plant cell walls. Catalysis by LPMOs requires the reduction of the active-site copper from Cu(II) to Cu(I) by a reducing agent and H(2)O(2) or O(2) as a cosubstrate. This chain is AA14 family lytic polysaccharide monooxygenase B, found in Talaromyces rugulosus (Penicillium rugulosum).